Reading from the N-terminus, the 61-residue chain is MAKTSMKVKQQRAPKFSTRAYTRCTICGRPHSVLRKYGICRICFRELAYKGQIPGVKKASW.

Zn(2+)-binding residues include Cys24, Cys27, Cys40, and Cys43.

This sequence belongs to the universal ribosomal protein uS14 family. Zinc-binding uS14 subfamily. As to quaternary structure, part of the 30S ribosomal subunit. Contacts proteins S3 and S10. Zn(2+) serves as cofactor.

Functionally, binds 16S rRNA, required for the assembly of 30S particles and may also be responsible for determining the conformation of the 16S rRNA at the A site. The protein is Small ribosomal subunit protein uS14 of Lachnospira eligens (strain ATCC 27750 / DSM 3376 / VPI C15-48 / C15-B4) (Eubacterium eligens).